The following is a 411-amino-acid chain: Na(+)-translocating NADH-quinone reductase subunit F (411 aa).

A helical transmembrane segment spans residues 5–25; that stretch reads VILALGIAAFTVIVLVLVAII. The 2Fe-2S ferredoxin-type domain occupies 36–130; that stretch reads GDITIGINDD…NMEVELPEEI (95 aa). [2Fe-2S] cluster contacts are provided by Cys-73, Cys-79, Cys-82, and Cys-114. One can recognise an FAD-binding FR-type domain in the interval 133–273; it reads VKKWECTVIS…SGPFGEFFAK (141 aa).

It belongs to the NqrF family. As to quaternary structure, composed of six subunits; NqrA, NqrB, NqrC, NqrD, NqrE and NqrF. The cofactor is [2Fe-2S] cluster. FAD serves as cofactor.

The protein resides in the cell inner membrane. The enzyme catalyses a ubiquinone + n Na(+)(in) + NADH + H(+) = a ubiquinol + n Na(+)(out) + NAD(+). In terms of biological role, NQR complex catalyzes the reduction of ubiquinone-1 to ubiquinol by two successive reactions, coupled with the transport of Na(+) ions from the cytoplasm to the periplasm. The first step is catalyzed by NqrF, which accepts electrons from NADH and reduces ubiquinone-1 to ubisemiquinone by a one-electron transfer pathway. The protein is Na(+)-translocating NADH-quinone reductase subunit F of Haemophilus influenzae (strain PittEE).